The chain runs to 213 residues: Isopentenyl-diphosphate Delta-isomerase (213 aa).

The segment covering 1 to 10 (MRDSMSEADR) has biased composition (basic and acidic residues). The interval 1 to 34 (MRDSMSEADRSSPGSGKTDREDETAENATQDVIA) is disordered. Residues histidine 51, histidine 58, and histidine 95 each coordinate Mn(2+). Residues 56-193 (VRHRAFTCLL…RQLRLCPWFE (138 aa)) form the Nudix hydrolase domain. Residue glutamate 113 coordinates Mg(2+). Mn(2+) is bound by residues glutamate 142 and glutamate 144. Glutamate 144 is a catalytic residue.

Belongs to the IPP isomerase type 1 family. It depends on Mg(2+) as a cofactor. Mn(2+) is required as a cofactor.

Its subcellular location is the cytoplasm. It carries out the reaction isopentenyl diphosphate = dimethylallyl diphosphate. The protein operates within isoprenoid biosynthesis; dimethylallyl diphosphate biosynthesis; dimethylallyl diphosphate from isopentenyl diphosphate: step 1/1. Its function is as follows. Catalyzes the 1,3-allylic rearrangement of the homoallylic substrate isopentenyl (IPP) to its highly electrophilic allylic isomer, dimethylallyl diphosphate (DMAPP). The sequence is that of Isopentenyl-diphosphate Delta-isomerase from Halobacterium salinarum (strain ATCC 700922 / JCM 11081 / NRC-1) (Halobacterium halobium).